The following is a 76-amino-acid chain: Conotoxin ArMLCL-022 (76 aa).

The signal sequence occupies residues 1 to 19 (MLCLPVFIILLLLASTAAS). The propeptide occupies 20–52 (NPLETRIQSDLIRAALEDADMKTERGFLGVLMK).

It belongs to the conotoxin T superfamily. In terms of tissue distribution, expressed by the venom duct.

The protein resides in the secreted. This Conus arenatus (Sand-dusted cone) protein is Conotoxin ArMLCL-022.